The chain runs to 69 residues: Antimicrobial peptide Eval36 (69 aa).

A signal peptide spans Met1 to Ser23. Leu37 carries the leucine amide modification. Positions Gly38–Arg69 are excised as a propeptide.

It belongs to the non-disulfide-bridged peptide (NDBP) superfamily. Short antimicrobial peptide (group 4) family. In terms of tissue distribution, expressed by the venom gland.

The protein localises to the secreted. In terms of biological role, probable antimicrobial peptide. Shows low inhibitory activity against herpes simplex virus type 1 (HSV-1). The sequence is that of Antimicrobial peptide Eval36 from Euscorpiops validus (Scorpion).